We begin with the raw amino-acid sequence, 196 residues long: MAFTEIANLISSKNFKAILDYCQRQEIESKNIDLIKSYYGVYLLSYLINNDLINAKHLWKRIPNDFKQSNQQLKNIYTIIKSISQTNPTITYTSLSINIGDDYTPFITTLKENFQQRTFELISNAYSSITVNDCSSYLGISPEDTIKFTTSKCWEHDKASNTLKPVPIQKQSSELPTGNQQIRSLTSYVLFLEKST.

The PCI domain maps to 10-177 (ISSKNFKAIL…IQKQSSELPT (168 aa)).

Belongs to the CSN8 family. Component of the CSN complex. The holocomplex is comprised of 8 subunits csn1-8. In the complex, it probably interacts directly with csn5 and csn8.

It is found in the cytoplasm. The protein localises to the nucleus. Functionally, component of the COP9 signalosome complex (CSN), a complex involved in various cellular and developmental processes. The CSN complex is an essential regulator of the ubiquitin (Ubl) conjugation pathway by mediating the deneddylation of the cullin subunits of E3 ligase complexes, leading to modify the Ubl ligase activity. This chain is COP9 signalosome complex subunit 8 (csn8), found in Dictyostelium discoideum (Social amoeba).